The following is a 353-amino-acid chain: tRNA-specific 2-thiouridylase MnmA 2 (353 aa).

Residues 9–16 (AMSGGVDS) and Met35 contribute to the ATP site. The active-site Nucleophile is the Cys98. A disulfide bridge connects residues Cys98 and Cys194. Residue Gly122 participates in ATP binding. Residues 144–146 (KDQ) form an interaction with tRNA region. Cys194 acts as the Cysteine persulfide intermediate in catalysis. Positions 300-301 (RY) are interaction with tRNA.

The protein belongs to the MnmA/TRMU family.

The protein localises to the cytoplasm. It carries out the reaction S-sulfanyl-L-cysteinyl-[protein] + uridine(34) in tRNA + AH2 + ATP = 2-thiouridine(34) in tRNA + L-cysteinyl-[protein] + A + AMP + diphosphate + H(+). Catalyzes the 2-thiolation of uridine at the wobble position (U34) of tRNA, leading to the formation of s(2)U34. The protein is tRNA-specific 2-thiouridylase MnmA 2 of Clostridium botulinum (strain ATCC 19397 / Type A).